Consider the following 1503-residue polypeptide: EF-hand calcium-binding domain-containing protein 5 (1503 aa).

The tract at residues 1–23 is disordered; it reads MNESASQEELRPAQENRKEDKER. A compositionally biased stretch (basic and acidic residues) spans 8 to 23; that stretch reads EELRPAQENRKEDKER. Ser77 is subject to Phosphoserine. Disordered stretches follow at residues 477-518, 544-656, and 730-750; these read ASKT…EQGP, IEPG…QGPY, and FPETTKKEVQKDKPCEPKSQK. The span at 549-561 shows a compositional bias: polar residues; sequence HTESTLEQGSSRR. Basic and acidic residues-rich tracts occupy residues 562-582 and 607-622; these read LLTEQETHRESTTEQGQHKGS and GSRRESIAEQDRHKGS. Residues 869–904 form the EF-hand domain; that stretch reads RQRLLLEAIFQKWDSDGSGFLDLKEVDELLYTYKEG. Residues Asp882, Asp884, Ser886, and Glu893 each contribute to the Ca(2+) site.

This chain is EF-hand calcium-binding domain-containing protein 5 (EFCAB5), found in Homo sapiens (Human).